We begin with the raw amino-acid sequence, 123 residues long: Methicillin resistance regulatory protein MecI (123 aa).

Positions 7–71 form a DNA-binding region, H-T-H motif; that stretch reads EISSAEWEVM…KDNKIFQYYS (65 aa). An important for dimerization region spans residues 74–123; sequence EESDIKYKTSKNFINKVYKGGFNSLVLNFVEKEDLSQDEIEELRNILNKK.

This sequence belongs to the BlaI transcriptional regulatory family. Monomer and homodimer. In terms of processing, upon exposure to beta-lactams, proteolytic cleavage at a single site impairs dimerization and abolishes repressor activity.

It localises to the cytoplasm. Functionally, transcriptional repressor that constitutively blocks the transcription of the gene for the penicillin-binding protein MecA. Binds DNA as a dimer. The protein is Methicillin resistance regulatory protein MecI (mecI) of Mammaliicoccus sciuri (Staphylococcus sciuri).